The chain runs to 4639 residues: Dynein heavy chain, cytoplasmic (4639 aa).

Residues 1-1856 are stem; that stretch reads MGDSLENPDT…TIHMANARFF (1856 aa). Coiled coils occupy residues 530–565, 774–794, and 1264–1368; these read LDIT…LRDQ, SLIE…DRAS, and DDAL…ARLR. AAA stretches follow at residues 1857–2084, 2166–2437, 2541–2790, and 2884–3153; these read YGFE…VLIS, EEIR…FTRL, EVET…WVRG, and VFYE…GGRT. ATP contacts are provided by residues 1895 to 1902, 2210 to 2217, 2580 to 2587, and 2922 to 2929; these read GPAGTGKT, GPSGSGKS, GPPGSGKT, and GVSGAGKT. 3 coiled-coil regions span residues 3189–3261, 3382–3478, and 3723–3782; these read GLNK…EKRK, AIAQ…WEST, and EFRL…EIET. The segment at 3189-3478 is stalk; it reads GLNKIAETVE…NIERERWEST (290 aa). 2 AAA regions span residues 3539 to 3768 and 3989 to 4205; these read LSNP…DINQ and AHNV…TLDT.

Belongs to the dynein heavy chain family. In terms of assembly, consists of at least two heavy chains and a number of intermediate and light chains.

Its subcellular location is the cytoplasm. It localises to the cytoskeleton. Cytoplasmic dynein acts as a motor for the intracellular retrograde motility of vesicles and organelles along microtubules. Dynein has ATPase activity; the force-producing power stroke is thought to occur on release of ADP. This is Dynein heavy chain, cytoplasmic (Dhc64C) from Drosophila melanogaster (Fruit fly).